Here is a 228-residue protein sequence, read N- to C-terminus: ATP-dependent dethiobiotin synthetase BioD (228 aa).

ATP is bound at residue 13–18 (DIGKTF). Threonine 17 lines the Mg(2+) pocket. The active site involves lysine 38. Serine 42 is a substrate binding site. ATP is bound by residues aspartate 55, 116–119 (EGSG), 179–180 (NK), and 208–210 (PKI). Mg(2+)-binding residues include aspartate 55 and glutamate 116.

The protein belongs to the dethiobiotin synthetase family. Homodimer. The cofactor is Mg(2+).

It is found in the cytoplasm. The catalysed reaction is (7R,8S)-7,8-diammoniononanoate + CO2 + ATP = (4R,5S)-dethiobiotin + ADP + phosphate + 3 H(+). The protein operates within cofactor biosynthesis; biotin biosynthesis; biotin from 7,8-diaminononanoate: step 1/2. Catalyzes a mechanistically unusual reaction, the ATP-dependent insertion of CO2 between the N7 and N8 nitrogen atoms of 7,8-diaminopelargonic acid (DAPA, also called 7,8-diammoniononanoate) to form a ureido ring. In Clostridium perfringens (strain ATCC 13124 / DSM 756 / JCM 1290 / NCIMB 6125 / NCTC 8237 / Type A), this protein is ATP-dependent dethiobiotin synthetase BioD.